Here is an 827-residue protein sequence, read N- to C-terminus: Periplasmic nitrate reductase (827 aa).

The tat-type signal signal peptide spans 1 to 34 (MSLTRRDFIKANAVPATAAAAGLATPAIAQPAKA). Residues 36–92 (IRWDKGVCRFCGTGCSVLVGVQDGRVVATQGDPDSPVNRGLNCIKGYFLSKIMYGED) form the 4Fe-4S Mo/W bis-MGD-type domain. 4 residues coordinate [4Fe-4S] cluster: cysteine 43, cysteine 46, cysteine 50, and cysteine 78. Mo-bis(molybdopterin guanine dinucleotide) is bound by residues lysine 80, glutamine 148, asparagine 173, cysteine 177, 210–217 (WGSNMAEM), 241–245 (STFEH), 260–262 (QTD), methionine 371, glutamine 375, asparagine 481, 507–508 (SD), lysine 530, aspartate 557, and 717–726 (TGRVLEHWHS). Position 793 (phenylalanine 793) interacts with substrate. Residues asparagine 801 and lysine 818 each coordinate Mo-bis(molybdopterin guanine dinucleotide).

Belongs to the prokaryotic molybdopterin-containing oxidoreductase family. NasA/NapA/NarB subfamily. In terms of assembly, component of the periplasmic nitrate reductase NapAB complex composed of NapA and NapB. It depends on [4Fe-4S] cluster as a cofactor. The cofactor is Mo-bis(molybdopterin guanine dinucleotide). In terms of processing, predicted to be exported by the Tat system. The position of the signal peptide cleavage has not been experimentally proven.

The protein resides in the periplasm. It catalyses the reaction 2 Fe(II)-[cytochrome] + nitrate + 2 H(+) = 2 Fe(III)-[cytochrome] + nitrite + H2O. Functionally, catalytic subunit of the periplasmic nitrate reductase complex NapAB. Receives electrons from NapB and catalyzes the reduction of nitrate to nitrite. The protein is Periplasmic nitrate reductase of Paramagnetospirillum magnetotacticum (Aquaspirillum magnetotacticum).